Consider the following 633-residue polypeptide: Chaperone protein DnaK (633 aa).

Thr-198 is subject to Phosphothreonine; by autocatalysis.

The protein belongs to the heat shock protein 70 family.

In terms of biological role, acts as a chaperone. This is Chaperone protein DnaK from Rhodopseudomonas palustris (strain BisA53).